The following is a 734-amino-acid chain: ABC transporter D family member 1 (734 aa).

The next 4 membrane-spanning stretches (helical) occupy residues 52–72, 112–132, 177–197, and 204–224; these read IIKILYAKPVIPLTLFLILFG, FAIGGSALLAAIINFIVSIMA, FTTLLASIVSQCITGPMVVVY, and TTIDWYAPLIVYGFFFLGYLI. The region spanning 63 to 351 is the ABC transmembrane type-1 domain; it reads PLTLFLILFG…VEEEQAKIQF (289 aa). Residues 271–286 are compositionally biased toward basic and acidic residues; it reads HPEKRFDNNDYDHGYE. A disordered region spans residues 271–296; that stretch reads HPEKRFDNNDYDHGYESDDSDQSCDE. A coiled-coil region spans residues 332–359; the sequence is DSNDQKEELLVEEEQAKIQFEALLKNKK. A helical transmembrane segment spans residues 374–394; it reads LFTYLSPIANYFIIAIPVFFL. The region spanning 492–729 is the ABC transporter domain; sequence ITLDDVTYFT…NNNNTNKIAE (238 aa). ATP is bound at residue 525–532; the sequence is GPSGSGKS. Positions 712 to 725 are enriched in low complexity; the sequence is QSNNINNNNNNNTN. Positions 712–734 are disordered; it reads QSNNINNNNNNNTNKIAEDSVFD.

The protein belongs to the ABC transporter superfamily. ABCD family. Peroxisomal fatty acyl CoA transporter (TC 3.A.1.203) subfamily.

Its subcellular location is the membrane. It carries out the reaction (9Z)-octadecenoyl-CoA(in) = (9Z)-octadecenoyl-CoA(out). The protein is ABC transporter D family member 1 (abcD1) of Dictyostelium discoideum (Social amoeba).